A 764-amino-acid polypeptide reads, in one-letter code: 5-methyltetrahydropteroyltriglutamate--homocysteine methyltransferase (764 aa).

Residues 16-19 (RELK) and lysine 121 each bind 5-methyltetrahydropteroyltri-L-glutamate. L-homocysteine is bound by residues 440 to 442 (IGS) and glutamate 493. L-methionine-binding positions include 440–442 (IGS) and glutamate 493. 5-methyltetrahydropteroyltri-L-glutamate is bound by residues 524-525 (RC) and tryptophan 570. An L-homocysteine-binding site is contributed by aspartate 608. L-methionine is bound at residue aspartate 608. Residue glutamate 614 participates in 5-methyltetrahydropteroyltri-L-glutamate binding. Residues histidine 650, cysteine 652, and glutamate 674 each coordinate Zn(2+). Histidine 703 serves as the catalytic Proton donor. Cysteine 735 provides a ligand contact to Zn(2+).

Belongs to the vitamin-B12 independent methionine synthase family. The cofactor is Zn(2+).

The enzyme catalyses 5-methyltetrahydropteroyltri-L-glutamate + L-homocysteine = tetrahydropteroyltri-L-glutamate + L-methionine. It participates in amino-acid biosynthesis; L-methionine biosynthesis via de novo pathway; L-methionine from L-homocysteine (MetE route): step 1/1. Catalyzes the transfer of a methyl group from 5-methyltetrahydrofolate to homocysteine resulting in methionine formation. This is 5-methyltetrahydropteroyltriglutamate--homocysteine methyltransferase from Burkholderia cenocepacia (strain ATCC BAA-245 / DSM 16553 / LMG 16656 / NCTC 13227 / J2315 / CF5610) (Burkholderia cepacia (strain J2315)).